The following is a 473-amino-acid chain: Ribulose bisphosphate carboxylase large chain 2 (473 aa).

Asn116 and Thr166 together coordinate substrate. Lys168 serves as the catalytic Proton acceptor. Position 170 (Lys170) interacts with substrate. Mg(2+) is bound by residues Lys194, Asp196, and Glu197. Residue Lys194 is modified to N6-carboxylysine. Catalysis depends on His287, which acts as the Proton acceptor. The substrate site is built by Arg288, His320, and Ser372.

The protein belongs to the RuBisCO large chain family. Type I subfamily. As to quaternary structure, heterohexadecamer of 8 large chains and 8 small chains. Requires Mg(2+) as cofactor.

The enzyme catalyses 2 (2R)-3-phosphoglycerate + 2 H(+) = D-ribulose 1,5-bisphosphate + CO2 + H2O. It catalyses the reaction D-ribulose 1,5-bisphosphate + O2 = 2-phosphoglycolate + (2R)-3-phosphoglycerate + 2 H(+). RuBisCO catalyzes two reactions: the carboxylation of D-ribulose 1,5-bisphosphate, the primary event in carbon dioxide fixation, as well as the oxidative fragmentation of the pentose substrate. Both reactions occur simultaneously and in competition at the same active site. This Acidithiobacillus ferrooxidans (strain ATCC 23270 / DSM 14882 / CIP 104768 / NCIMB 8455) (Ferrobacillus ferrooxidans (strain ATCC 23270)) protein is Ribulose bisphosphate carboxylase large chain 2.